Reading from the N-terminus, the 304-residue chain is dTDP-4-dehydrorhamnose reductase (304 aa).

NADH contacts are provided by residues 15–17 (GQL), 41–42 (DI), and 63–65 (AYT). NADPH-binding positions include 16–17 (QL), 41–42 (DI), and 63–65 (AYT). Position 104–105 (104–105 (TD)) interacts with dTDP-beta-L-rhamnose. NADH is bound by residues tyrosine 132 and lysine 136. Residues tyrosine 132 and lysine 136 each coordinate NADPH. The Proton donor/acceptor role is filled by tyrosine 132. Position 157 (tryptophan 157) interacts with dTDP-beta-L-rhamnose.

The protein belongs to the dTDP-4-dehydrorhamnose reductase family. Mg(2+) is required as a cofactor.

The enzyme catalyses dTDP-beta-L-rhamnose + NADP(+) = dTDP-4-dehydro-beta-L-rhamnose + NADPH + H(+). The protein operates within carbohydrate biosynthesis; dTDP-L-rhamnose biosynthesis. In terms of biological role, involved in the biosynthesis of the dTDP-L-rhamnose which is a component of the critical linker, D-N-acetylglucosamine-L-rhamnose disaccharide, which connects the galactan region of arabinogalactan to peptidoglycan via a phosphodiester linkage. Catalyzes the reduction of dTDP-6-deoxy-L-lyxo-4-hexulose to yield dTDP-L-rhamnose. In Mycobacterium tuberculosis (strain CDC 1551 / Oshkosh), this protein is dTDP-4-dehydrorhamnose reductase.